The primary structure comprises 59 residues: Large ribosomal subunit protein uL30 (59 aa).

This sequence belongs to the universal ribosomal protein uL30 family. Part of the 50S ribosomal subunit.

This chain is Large ribosomal subunit protein uL30, found in Syntrophotalea carbinolica (strain DSM 2380 / NBRC 103641 / GraBd1) (Pelobacter carbinolicus).